Here is a 535-residue protein sequence, read N- to C-terminus: MGIVEPGCGDMLTGTEPMPGSDEGRAPGADPQHRYFYPEPGAQDADERRGGGSLGSPYPGGALVPAPPSRFLGAYAYPPRPQAAGFPGAGESFPPPADAEGYQPGEGYAAPDPRAGLYPGPREDYALPAGLEVSGKLRVALNNHLLWSKFNQHQTEMIITKQGRRMFPFLSFTVAGLEPTSHYRMFVDVVLVDQHHWRYQSGKWVQCGKAEGSMPGNRLYVHPDSPNTGAHWMRQEVSFGKLKLTNNKGASNNVTQMIVLQSLHKYQPRLHIVEVNDGEPEAACNASNTHIFTFQETQFIAVTAYQNAEITQLKIDNNPFAKGFRENFESMYTSVDTSIPSPPGPNCQFLGGDHYSPLLPNQYPVPSRFYPDLPGQAKDVVPQAYWLGAPRDHSYEAEFRAVSMKPAFLPSAPGPTMSYYRGQEVLAPGAGWPVAPQYPPKMGPASWFRPMRTLPMEPGPGGSEGRGPEDQGPPLVWTEIAPIRPESSDSGLGEGDSKRRRVSPYPSSGDSSSPAGAPSPFDKEAEGQFYNYFPN.

Residues 1-62 are disordered; sequence MGIVEPGCGD…SLGSPYPGGA (62 aa). Serine 53 is subject to Phosphoserine. Tyrosine 77 is modified (phosphotyrosine). The segment at 83–109 is disordered; that stretch reads AAGFPGAGESFPPPADAEGYQPGEGYA. Tyrosine 118 bears the Phosphotyrosine mark. Positions 141–326 form a DNA-binding region, T-box; it reads LNNHLLWSKF…NNPFAKGFRE (186 aa). Tyrosine 220 carries the post-translational modification Phosphotyrosine; by ABL1. Serine 225 carries the post-translational modification Phosphoserine. Position 266 is a phosphotyrosine; by ABL1 (tyrosine 266). The residue at position 303 (threonine 303) is a Phosphothreonine. Tyrosine 305 is modified (phosphotyrosine; by ABL1). Lysine 314 participates in a covalent cross-link: Glycyl lysine isopeptide (Lys-Gly) (interchain with G-Cter in ubiquitin). Positions 449 to 535 are disordered; the sequence is RPMRTLPMEP…EGQFYNYFPN (87 aa). The span at 503 to 520 shows a compositional bias: low complexity; sequence SPYPSSGDSSSPAGAPSP. Residue serine 513 is modified to Phosphoserine. Tyrosine 530 bears the Phosphotyrosine; by ITK mark.

In terms of assembly, interacts with RUNX1, RUNX3, ITK, ABL1, RELA, CDK9 and KDM6B. The phosphorylated form (at Thr-303) interacts with NFATC2. Interacts with SMARCA4 in a KDM6B-dependent manner. Interacts with CCTN1. Interacts with USP10. The phosphorylated form (at Tyr-530) interacts with GATA3. Phosphorylations at Ser-53, Tyr-77, Ser-225 and Ser-513 are regulated by mTORC1. Phosphorylation at Tyr-530 is essential for its interaction GATA3. Phosphorylation at Tyr-220, Tyr-266 and Tyr-305 enhances its transcriptional activator activity. Phosphorylation at Thr-303 is required for its interaction with NFATC2. In terms of processing, ubiquitinated at Lys-314, leading to its degradation by the proteasome. Ubiquitination is essential for controlling protein stability, binding to the T-box-binding element of the IFN-gamma promoter, and for interaction with NFATC2 through induction of phosphorylation at Thr-303. Deubiquitinated by USP10 leading to its stabilization. T-cell specific.

It localises to the nucleus. Functionally, lineage-defining transcription factor which initiates Th1 lineage development from naive Th precursor cells both by activating Th1 genetic programs and by repressing the opposing Th2 and Th17 genetic programs. Activates transcription of a set of genes important for Th1 cell function, including those encoding IFN-gamma and the chemokine receptor CXCR3. Induces permissive chromatin accessibilty and CpG methylation in IFNG. Activates IFNG and CXCR3 genes in part by recruiting chromatin remodeling complexes including KDM6B, a SMARCA4-containing SWI/SNF-complex, and an H3K4me2-methyltransferase complex to their promoters and all of these complexes serve to establish a more permissive chromatin state conducive with transcriptional activation. Can activate Th1 genes also via recruitment of Mediator complex and P-TEFb (composed of CDK9 and CCNT1/cyclin-T1) in the form of the super elongation complex (SEC) to super-enhancers and associated genes in activated Th1 cells. Inhibits the Th17 cell lineage commitment by blocking RUNX1-mediated transactivation of Th17 cell-specific transcriptinal regulator RORC. Inhibits the Th2 cell lineage commitment by suppressing the production of Th2 cytokines, such as IL-4, IL-5, and IL- 13, via repression of transcriptional regulators GATA3 and NFATC2. Protects Th1 cells from amplifying aberrant type-I IFN response in an IFN-gamma abundant microenvironment by acting as a repressor of type-I IFN transcription factors and type-I IFN-stimulated genes. Acts as a regulator of antiviral B-cell responses; controls chronic viral infection by promoting the antiviral antibody IgG2a isotype switching and via regulation of a broad antiviral gene expression program. Required for the correct development of natural killer (NK) and mucosal-associated invariant T (MAIT) cells. This is T-box transcription factor TBX21 (TBX21) from Homo sapiens (Human).